The chain runs to 150 residues: DNA-directed RNA polymerases I, II, and III subunit RPABC3 (150 aa).

N-acetylalanine is present on alanine 2.

Belongs to the eukaryotic RPB8 RNA polymerase subunit family. In terms of assembly, component of the RNA polymerase I (Pol I), RNA polymerase II (Pol II) and RNA polymerase III (Pol III) complexes consisting of at least 13, 12 and 17 subunits, respectively. Pol I complex consists of a ten-subunit catalytic core composed of POLR1A/RPA1, POLR1B/RPA2, POLR1C/RPAC1, POLR1D/RPAC2, POLR1H/RPA12, POLR2E/RPABC1, POLR2F/RPABC2, POLR2H/RPABC3, POLR2K/RPABC4 and POLR2L/RPABC5; a mobile stalk subunit POLR1F/RPA43 protruding from the core and additional subunits homologous to general transcription factors POLR1E/RPA49 and POLR1G/RPA34. Part of Pol I pre-initiation complex (PIC), in which Pol I core assembles with RRN3 and promoter-bound UTBF and SL1/TIF-IB complex. Pol II complex contains a ten-subunit catalytic core composed of POLR2A/RPB1, POLR2B/RPB2, POLR2C/RPB3, POLR2I/RPB9, POLR2J/RPB11, POLR2E/RPABC1, POLR2F/RPABC2, POLR2H/RPABC3, POLR2K/RPABC4 and POLR2L/RPABC5 and a mobile stalk composed of two subunits POLR2D/RPB4 and POLR2G/RPB7. Part of Pol II(G) complex, in which Pol II core associates with an additional subunit POLR2M; unlike conventional Pol II, Pol II(G) functions as a transcriptional repressor. Part of Pol II pre-initiation complex (PIC), in which Pol II core assembles with Mediator, general transcription factors and other specific initiation factors including GTF2E1, GTF2E2, GTF2F1, GTF2F2, TCEA1, ERCC2, ERCC3, GTF2H2, GTF2H3, GTF2H4, GTF2H5, GTF2A1, GTF2A2, GTF2B and TBP; this large multi-subunit PIC complex mediates DNA unwinding and targets Pol II core to the transcription start site where the first phosphodiester bond forms. Directly interacts with POLR2A. Pol III complex consists of a ten-subunit catalytic core composed of POLR3A/RPC1, POLR3B/RPC2, POLR1C/RPAC1, POLR1D/RPAC2, POLR3K/RPC10, POLR2E/RPABC1, POLR2F/RPABC2, POLR2H/RPABC3, POLR2K/RPABC4 and POLR2L/RPABC5; a mobile stalk composed of two subunits POLR3H/RPC8 and CRCP/RPC9, protruding from the core and functioning primarily in transcription initiation; and additional subunits homologous to general transcription factors of the RNA polymerase II machinery, POLR3C/RPC3-POLR3F/RPC6-POLR3G/RPC7 heterotrimer required for transcription initiation and POLR3D/RPC4-POLR3E/RPC5 heterodimer involved in both transcription initiation and termination.

The protein resides in the nucleus. It is found in the nucleolus. Its function is as follows. DNA-dependent RNA polymerase catalyzes the transcription of DNA into RNA using the four ribonucleoside triphosphates as substrates. Common component of RNA polymerases I, II and III which synthesize ribosomal RNA precursors, mRNA precursors and many functional non-coding RNAs, and small RNAs, such as 5S rRNA and tRNAs, respectively. The protein is DNA-directed RNA polymerases I, II, and III subunit RPABC3 (POLR2H) of Bos taurus (Bovine).